A 457-amino-acid chain; its full sequence is Bifunctional protein GlmU (457 aa).

Positions 1–229 (MSNSAKSVVI…LSEMEGVNNR (229 aa)) are pyrophosphorylase. UDP-N-acetyl-alpha-D-glucosamine contacts are provided by residues 11–14 (LAAG), Lys25, Gln76, 81–82 (GT), 103–105 (YGD), Gly140, Glu154, Asn169, and Asn227. Asp105 provides a ligand contact to Mg(2+). Position 227 (Asn227) interacts with Mg(2+). Residues 230 to 250 (LQLSALERIYQSEQAEQLLLA) form a linker region. The tract at residues 251 to 457 (GVMLLDPARF…GWKRPVKEKK (207 aa)) is N-acetyltransferase. Positions 333 and 351 each coordinate UDP-N-acetyl-alpha-D-glucosamine. His363 (proton acceptor) is an active-site residue. 2 residues coordinate UDP-N-acetyl-alpha-D-glucosamine: Tyr366 and Asn377. Acetyl-CoA is bound by residues Ala380, 386-387 (NY), Ser405, Ala423, and Arg440.

This sequence in the N-terminal section; belongs to the N-acetylglucosamine-1-phosphate uridyltransferase family. The protein in the C-terminal section; belongs to the transferase hexapeptide repeat family. In terms of assembly, homotrimer. It depends on Mg(2+) as a cofactor.

Its subcellular location is the cytoplasm. The enzyme catalyses alpha-D-glucosamine 1-phosphate + acetyl-CoA = N-acetyl-alpha-D-glucosamine 1-phosphate + CoA + H(+). The catalysed reaction is N-acetyl-alpha-D-glucosamine 1-phosphate + UTP + H(+) = UDP-N-acetyl-alpha-D-glucosamine + diphosphate. The protein operates within nucleotide-sugar biosynthesis; UDP-N-acetyl-alpha-D-glucosamine biosynthesis; N-acetyl-alpha-D-glucosamine 1-phosphate from alpha-D-glucosamine 6-phosphate (route II): step 2/2. It participates in nucleotide-sugar biosynthesis; UDP-N-acetyl-alpha-D-glucosamine biosynthesis; UDP-N-acetyl-alpha-D-glucosamine from N-acetyl-alpha-D-glucosamine 1-phosphate: step 1/1. Its pathway is bacterial outer membrane biogenesis; LPS lipid A biosynthesis. Functionally, catalyzes the last two sequential reactions in the de novo biosynthetic pathway for UDP-N-acetylglucosamine (UDP-GlcNAc). The C-terminal domain catalyzes the transfer of acetyl group from acetyl coenzyme A to glucosamine-1-phosphate (GlcN-1-P) to produce N-acetylglucosamine-1-phosphate (GlcNAc-1-P), which is converted into UDP-GlcNAc by the transfer of uridine 5-monophosphate (from uridine 5-triphosphate), a reaction catalyzed by the N-terminal domain. The polypeptide is Bifunctional protein GlmU (Photorhabdus laumondii subsp. laumondii (strain DSM 15139 / CIP 105565 / TT01) (Photorhabdus luminescens subsp. laumondii)).